The following is a 412-amino-acid chain: Multifunctional CCA protein (412 aa).

The ATP site is built by glycine 8 and arginine 11. Residues glycine 8 and arginine 11 each coordinate CTP. Positions 21 and 23 each coordinate Mg(2+). The ATP site is built by arginine 91, arginine 137, and arginine 140. CTP is bound by residues arginine 91, arginine 137, and arginine 140. An HD domain is found at cysteine 228–leucine 329.

It belongs to the tRNA nucleotidyltransferase/poly(A) polymerase family. Bacterial CCA-adding enzyme type 1 subfamily. As to quaternary structure, monomer. Can also form homodimers and oligomers. Mg(2+) is required as a cofactor. Requires Ni(2+) as cofactor.

It carries out the reaction a tRNA precursor + 2 CTP + ATP = a tRNA with a 3' CCA end + 3 diphosphate. The enzyme catalyses a tRNA with a 3' CCA end + 2 CTP + ATP = a tRNA with a 3' CCACCA end + 3 diphosphate. In terms of biological role, catalyzes the addition and repair of the essential 3'-terminal CCA sequence in tRNAs without using a nucleic acid template. Adds these three nucleotides in the order of C, C, and A to the tRNA nucleotide-73, using CTP and ATP as substrates and producing inorganic pyrophosphate. tRNA 3'-terminal CCA addition is required both for tRNA processing and repair. Also involved in tRNA surveillance by mediating tandem CCA addition to generate a CCACCA at the 3' terminus of unstable tRNAs. While stable tRNAs receive only 3'-terminal CCA, unstable tRNAs are marked with CCACCA and rapidly degraded. This chain is Multifunctional CCA protein, found in Acinetobacter baumannii (strain SDF).